Here is a 215-residue protein sequence, read N- to C-terminus: Small ribosomal subunit protein uS5 (215 aa).

The disordered stretch occupies residues 1–62 (MTDSSPQSNP…QERDSEWQER (62 aa)). Low complexity predominate over residues 9–28 (NPNAVPGAADVPAAAEGQQQ). A compositionally biased stretch (basic and acidic residues) spans 29 to 61 (EQRRGGGRGERGDRRGGRRGDRRNQERDSEWQE). The S5 DRBM domain maps to 59 to 122 (WQERVVQIRR…ADGKKHLVKV (64 aa)).

This sequence belongs to the universal ribosomal protein uS5 family. In terms of assembly, part of the 30S ribosomal subunit. Contacts proteins S4 and S8.

Its function is as follows. With S4 and S12 plays an important role in translational accuracy. Functionally, located at the back of the 30S subunit body where it stabilizes the conformation of the head with respect to the body. The protein is Small ribosomal subunit protein uS5 of Parasynechococcus marenigrum (strain WH8102).